The following is a 170-amino-acid chain: Ureidoglycolate lyase (170 aa).

Belongs to the ureidoglycolate lyase family. In terms of assembly, homodimer. Ni(2+) is required as a cofactor.

The enzyme catalyses (S)-ureidoglycolate = urea + glyoxylate. It participates in nitrogen metabolism; (S)-allantoin degradation. Its function is as follows. Catalyzes the catabolism of the allantoin degradation intermediate (S)-ureidoglycolate, generating urea and glyoxylate. Involved in the utilization of allantoin as nitrogen source. The sequence is that of Ureidoglycolate lyase from Pseudomonas syringae pv. tomato (strain ATCC BAA-871 / DC3000).